The chain runs to 189 residues: Pyridoxal 5'-phosphate synthase subunit PdxT (189 aa).

46 to 48 is an L-glutamine binding site; it reads GES. The Nucleophile role is filled by Cys-78. Residues Arg-107 and 136–137 each bind L-glutamine; that span reads IR. Residues His-173 and Glu-175 each act as charge relay system in the active site.

The protein belongs to the glutaminase PdxT/SNO family. In the presence of PdxS, forms a dodecamer of heterodimers. Only shows activity in the heterodimer.

The catalysed reaction is aldehydo-D-ribose 5-phosphate + D-glyceraldehyde 3-phosphate + L-glutamine = pyridoxal 5'-phosphate + L-glutamate + phosphate + 3 H2O + H(+). It carries out the reaction L-glutamine + H2O = L-glutamate + NH4(+). It functions in the pathway cofactor biosynthesis; pyridoxal 5'-phosphate biosynthesis. In terms of biological role, catalyzes the hydrolysis of glutamine to glutamate and ammonia as part of the biosynthesis of pyridoxal 5'-phosphate. The resulting ammonia molecule is channeled to the active site of PdxS. This Roseiflexus sp. (strain RS-1) protein is Pyridoxal 5'-phosphate synthase subunit PdxT.